The sequence spans 301 residues: Protoheme IX farnesyltransferase (301 aa).

The next 9 helical transmembrane spans lie at valine 29–valine 49, isoleucine 51–phenylalanine 71, valine 96–valine 118, leucine 123–leucine 143, isoleucine 151–glycine 171, alanine 177–isoleucine 197, cysteine 223–methionine 243, cysteine 244–tryptophan 264, and phenylalanine 281–leucine 301.

It belongs to the UbiA prenyltransferase family. Protoheme IX farnesyltransferase subfamily.

It is found in the cell inner membrane. The enzyme catalyses heme b + (2E,6E)-farnesyl diphosphate + H2O = Fe(II)-heme o + diphosphate. It participates in porphyrin-containing compound metabolism; heme O biosynthesis; heme O from protoheme: step 1/1. Its function is as follows. Converts heme B (protoheme IX) to heme O by substitution of the vinyl group on carbon 2 of heme B porphyrin ring with a hydroxyethyl farnesyl side group. The sequence is that of Protoheme IX farnesyltransferase from Shewanella halifaxensis (strain HAW-EB4).